Reading from the N-terminus, the 593-residue chain is Salivary alpha-glucosidase (593 aa).

A signal peptide spans 1 to 19 (MPPLGVLLLLVALGHSTQG). Residues Asp49, Asp51, Asp53, Ile55, Asp57, and Asn130 each contribute to the Ca(2+) site. N-linked (GlcNAc...) asparagine glycans are attached at residues Asn130 and Asn163. Ca(2+) is bound by residues Asp201, Tyr235, Leu236, and Glu238. Residues Asn295, Asn310, Asn338, Asn414, Asn445, and Asn453 are each glycosylated (N-linked (GlcNAc...) asparagine). Asn338 provides a ligand contact to N-acetyl-beta-D-glucosamine.

It belongs to the glycosyl hydrolase 13 family. Saliva (at protein level). Proximal lateral lobes of the salivary gland (at protein level).

The protein localises to the secreted. The catalysed reaction is Hydrolysis of terminal, non-reducing (1-&gt;4)-linked alpha-D-glucose residues with release of alpha-D-glucose.. Functions as a glucosidase that shows high activity toward sucrose, a major component of nectar. Assists the mosquito in its sugar-feeding capabilities. The chain is Salivary alpha-glucosidase from Anopheles gambiae (African malaria mosquito).